Here is a 275-residue protein sequence, read N- to C-terminus: Large ribosomal subunit protein uL2 (275 aa).

2 disordered regions span residues 36 to 55 and 223 to 275; these read KQSK…RHQG and VAMN…RHKR. Residues 39–48 show a composition bias toward polar residues; it reads KNAGRNNSGR. The segment covering 229–239 has biased composition (basic and acidic residues); it reads DHPHGGGEGRT.

It belongs to the universal ribosomal protein uL2 family. As to quaternary structure, part of the 50S ribosomal subunit. Forms a bridge to the 30S subunit in the 70S ribosome.

In terms of biological role, one of the primary rRNA binding proteins. Required for association of the 30S and 50S subunits to form the 70S ribosome, for tRNA binding and peptide bond formation. It has been suggested to have peptidyltransferase activity; this is somewhat controversial. Makes several contacts with the 16S rRNA in the 70S ribosome. This chain is Large ribosomal subunit protein uL2, found in Aromatoleum aromaticum (strain DSM 19018 / LMG 30748 / EbN1) (Azoarcus sp. (strain EbN1)).